We begin with the raw amino-acid sequence, 634 residues long: DNA-directed RNA polymerase subunit gamma (634 aa).

Residues Cys74, Cys76, Cys89, and Cys92 each contribute to the Zn(2+) site. 3 residues coordinate Mg(2+): Asp471, Asp473, and Asp475.

It belongs to the RNA polymerase beta' chain family. RpoC1 subfamily. In cyanobacteria the RNAP catalytic core is composed of 2 alpha, 1 beta, 1 beta', 1 gamma and 1 omega subunit. When a sigma factor is associated with the core the holoenzyme is formed, which can initiate transcription. Mg(2+) is required as a cofactor. It depends on Zn(2+) as a cofactor.

The enzyme catalyses RNA(n) + a ribonucleoside 5'-triphosphate = RNA(n+1) + diphosphate. Functionally, DNA-dependent RNA polymerase catalyzes the transcription of DNA into RNA using the four ribonucleoside triphosphates as substrates. The protein is DNA-directed RNA polymerase subunit gamma of Synechococcus sp. (strain CC9605).